A 1158-amino-acid chain; its full sequence is ATP-dependent helicase/deoxyribonuclease subunit B (1158 aa).

8–15 (GRAGTGKS) serves as a coordination point for ATP. Residues cysteine 791, cysteine 1112, cysteine 1115, and cysteine 1121 each coordinate [4Fe-4S] cluster.

This sequence belongs to the helicase family. AddB/RexB type 1 subfamily. As to quaternary structure, heterodimer of AddA and AddB. Requires Mg(2+) as cofactor. It depends on [4Fe-4S] cluster as a cofactor.

Its function is as follows. The heterodimer acts as both an ATP-dependent DNA helicase and an ATP-dependent, dual-direction single-stranded exonuclease. Recognizes the chi site generating a DNA molecule suitable for the initiation of homologous recombination. The AddB subunit has 5' -&gt; 3' nuclease activity but not helicase activity. The chain is ATP-dependent helicase/deoxyribonuclease subunit B from Clostridium perfringens (strain 13 / Type A).